The sequence spans 884 residues: E3 SUMO-protein ligase SIZ1 (884 aa).

Residues 11 to 45 (LSYFRIKELKDVLTQLGLSKQGKKQELVDRILTLL) enclose the SAP domain. The tract at residues 84-103 (LASKGQVSSDTSNLKVKGEP) is disordered. Over residues 88–97 (GQVSSDTSNL) the composition is skewed to polar residues. Residue K100 forms a Glycyl lysine isopeptide (Lys-Gly) (interchain with G-Cter in SUMO) linkage. Residues 112–168 (KVRCVCGNSLETDSMIQCEDPRCHVWQHVGCVILPDKPMDGNPPLPESFYCEICRLT) form a PHD-type zinc finger. The segment at 346–429 (SDSDIEVVAD…FNRITSKMKH (84 aa)) adopts an SP-RING-type zinc-finger fold. Residues C379, H381, C402, and C405 each coordinate Zn(2+). A Glycyl lysine isopeptide (Lys-Gly) (interchain with G-Cter in SUMO) cross-link involves residue K488. 3 disordered regions span residues 753–778 (PSLQIFLPTKPDASAQSGFKNQADMS), 792–824 (GDSASGNHGDPATTNGINSSHQMSTREGSMDTT), and 836–869 (DSRQDKAKKQRSDNPFSFPRQKRSNNEQDHQTRH). Polar residues-rich tracts occupy residues 766 to 778 (SAQSGFKNQADMS) and 803 to 824 (ATTNGINSSHQMSTREGSMDTT). A compositionally biased stretch (basic and acidic residues) spans 837-847 (SRQDKAKKQRS).

This sequence belongs to the PIAS family. As to quaternary structure, interacts (via PHD domain) with SCE1, GTE3 and GTE5. Autosumoylated at Lys-100 and Lys-488. In terms of tissue distribution, ubiquitous.

The protein resides in the nucleus speckle. Its pathway is protein modification; protein sumoylation. Functionally, E3 SUMO protein ligase involved in regulation processes. Mediates SUMO/ attachment to PHR1, a MYB transcriptional activator controlling the phosphate deficiency responses. Functions as an upstream negative regulator of salicylic acid (SA) accumulation and subsequent SA-mediated systemic acquired resistance (SAR) signaling. Probably not involved in jasmonic acid (JA)-mediated defense response. Participates in abiotic stress-induced sumoylation. Controls heat shock-induced SUMO1 and SUMO2 conjugation and facilitates basal thermotolerance. Involved in freezing tolerance by mediating sumoylation of ICE1, a transcription activator of the cold signaling regulator CBF3/DREB1A. Acts as a positive regulator of drought stress tolerance. Acts as a floral repressor that promotes FLC expression by repressing FLD activity through sumoylation. Acts as a negative regulator of abscisic acid (ABA) signaling through ABI5 sumoylation. Mediates sumoylation of SCE1, GTE3 and GTE5. Functions as a negative regulator of SnRK1 signaling through sumoylation of several components of the SnRK1 complex. The protein is E3 SUMO-protein ligase SIZ1 of Arabidopsis thaliana (Mouse-ear cress).